The primary structure comprises 57 residues: Large ribosomal subunit protein bL32 (57 aa).

The span at 1-16 shows a compositional bias: basic residues; it reads MAVQKSRKTRSKRGMR. Residues 1-45 are disordered; the sequence is MAVQKSRKTRSKRGMRRSHDALTAPAQLSVDATSGETHRRHHMTA.

It belongs to the bacterial ribosomal protein bL32 family.

This chain is Large ribosomal subunit protein bL32, found in Psychromonas ingrahamii (strain DSM 17664 / CCUG 51855 / 37).